The sequence spans 197 residues: dTTP/UTP pyrophosphatase (197 aa).

Aspartate 70 acts as the Proton acceptor in catalysis.

The protein belongs to the Maf family. YhdE subfamily. A divalent metal cation is required as a cofactor.

It localises to the cytoplasm. It catalyses the reaction dTTP + H2O = dTMP + diphosphate + H(+). The catalysed reaction is UTP + H2O = UMP + diphosphate + H(+). Its function is as follows. Nucleoside triphosphate pyrophosphatase that hydrolyzes dTTP and UTP. May have a dual role in cell division arrest and in preventing the incorporation of modified nucleotides into cellular nucleic acids. This Salmonella choleraesuis (strain SC-B67) protein is dTTP/UTP pyrophosphatase (yceF2).